A 139-amino-acid polypeptide reads, in one-letter code: Aspartate 1-decarboxylase (139 aa).

The Schiff-base intermediate with substrate; via pyruvic acid role is filled by serine 25. Serine 25 is subject to Pyruvic acid (Ser). Substrate is bound at residue threonine 57. Tyrosine 58 (proton donor) is an active-site residue. 73 to 75 (GAA) provides a ligand contact to substrate. A disordered region spans residues 116 to 139 (ELGSDPAHAPEGSGLTSPRSLTFA). The segment covering 129–139 (GLTSPRSLTFA) has biased composition (polar residues).

This sequence belongs to the PanD family. In terms of assembly, heterooctamer of four alpha and four beta subunits. Pyruvate serves as cofactor. Post-translationally, is synthesized initially as an inactive proenzyme, which is activated by self-cleavage at a specific serine bond to produce a beta-subunit with a hydroxyl group at its C-terminus and an alpha-subunit with a pyruvoyl group at its N-terminus.

It localises to the cytoplasm. It carries out the reaction L-aspartate + H(+) = beta-alanine + CO2. It functions in the pathway cofactor biosynthesis; (R)-pantothenate biosynthesis; beta-alanine from L-aspartate: step 1/1. In terms of biological role, catalyzes the pyruvoyl-dependent decarboxylation of aspartate to produce beta-alanine. This chain is Aspartate 1-decarboxylase, found in Nocardia farcinica (strain IFM 10152).